A 177-amino-acid polypeptide reads, in one-letter code: Disulfide bond formation protein B (177 aa).

The Cytoplasmic segment spans residues 1–14 (MMVWNWIDRTPRRV). The chain crosses the membrane as a helical span at residues 15–31 (LALISLACVALLACGLY). Residues 32-49 (LQHVVGLVPCPMCIVQRY) are Periplasmic-facing. A disulfide bridge connects residues Cys41 and Cys44. The helical transmembrane segment at 50 to 64 (ALIGLALLTGLASAR) threads the bilayer. Topologically, residues 65–70 (SAKGWW) are cytoplasmic. Residues 71–89 (LTLSALAALTAGFGATVAA) traverse the membrane as a helical segment. The Periplasmic segment spans residues 90–145 (RQSWLQWYPPQSVSCGRDFYGMIESFPLSRAIPMILRGSGDCAAVDWSLLGGSIAN). Cys104 and Cys131 form a disulfide bridge. Residues 146 to 164 (WSFLCFALLGLLLLALLAR) form a helical membrane-spanning segment. The Cytoplasmic segment spans residues 165 to 177 (GVRGARQRAPAPV).

The protein belongs to the DsbB family.

It localises to the cell inner membrane. In terms of biological role, required for disulfide bond formation in some periplasmic proteins. Acts by oxidizing the DsbA protein. This Verminephrobacter eiseniae (strain EF01-2) protein is Disulfide bond formation protein B.